Consider the following 215-residue polypeptide: MKPLILGLAAVLALSACQVQKAPDFDYTSFKESKPASILVVPPLNESPDVNGTWGVLASTAAPLSEAGYYVFPAAVVEETFKQNGLTNAADIHAVRPEKLHQIFGNDAVLYITVTEYGTSYQILDSVTTVSAKARLVDSRNGKELWSGSASIREGSNNSNSGLLGALVSAVVNQIANSLTDRGYQVSKTAAYNLLSPYSHNGILKGPRFVEEQPK.

An N-terminal signal peptide occupies residues 1 to 16 (MKPLILGLAAVLALSA). Cys-17 carries N-palmitoyl cysteine lipidation. Cys-17 is lipidated: S-diacylglycerol cysteine.

It localises to the cell membrane. The protein is Putative lipoprotein NMB1124/NMB1162 of Neisseria meningitidis serogroup B (strain ATCC BAA-335 / MC58).